A 604-amino-acid polypeptide reads, in one-letter code: Elongation factor 4 (604 aa).

The tr-type G domain occupies 7-190 (SRLRNFCIIA…IVDRVPAPPD (184 aa)). GTP-binding positions include 19 to 24 (DHGKST) and 136 to 139 (NKID).

The protein belongs to the TRAFAC class translation factor GTPase superfamily. Classic translation factor GTPase family. LepA subfamily.

The protein localises to the cell inner membrane. It catalyses the reaction GTP + H2O = GDP + phosphate + H(+). Functionally, required for accurate and efficient protein synthesis under certain stress conditions. May act as a fidelity factor of the translation reaction, by catalyzing a one-codon backward translocation of tRNAs on improperly translocated ribosomes. Back-translocation proceeds from a post-translocation (POST) complex to a pre-translocation (PRE) complex, thus giving elongation factor G a second chance to translocate the tRNAs correctly. Binds to ribosomes in a GTP-dependent manner. This is Elongation factor 4 from Synechococcus sp. (strain RCC307).